A 113-amino-acid chain; its full sequence is Transcriptional activator RamA (113 aa).

Residues 9 to 107 (DTIVEWIDDN…HQPPGAYRKE (99 aa)) enclose the HTH araC/xylS-type domain. DNA-binding regions (H-T-H motif) lie at residues 26–47 (EDIA…LQYK) and 74–97 (VYEI…TRTF).

Probable transcriptional activator. The sequence is that of Transcriptional activator RamA (ramA) from Enterobacter cloacae.